A 634-amino-acid polypeptide reads, in one-letter code: Extracellular metalloproteinase MEP (634 aa).

A signal peptide spans 1–18 (MRGLLLAGALALPASVFA). The propeptide occupies 19-245 (HPAHQSYGLN…IHGVVDYVAE (227 aa)). His429 lines the Zn(2+) pocket. Glu430 is an active-site residue. His433 contributes to the Zn(2+) binding site.

The protein belongs to the peptidase M36 family. Requires Zn(2+) as cofactor.

The protein localises to the secreted. Secreted metalloproteinase that allows assimilation of proteinaceous substrates and probably acts as a virulence factor. The polypeptide is Extracellular metalloproteinase MEP (MEP) (Neosartorya fischeri (strain ATCC 1020 / DSM 3700 / CBS 544.65 / FGSC A1164 / JCM 1740 / NRRL 181 / WB 181) (Aspergillus fischerianus)).